The chain runs to 269 residues: Glutamate racemase (269 aa).

Substrate contacts are provided by residues 13–14 and 45–46; these read DS and YS. The active-site Proton donor/acceptor is cysteine 77. 78 to 79 provides a ligand contact to substrate; the sequence is NT. Catalysis depends on cysteine 188, which acts as the Proton donor/acceptor. Residue 189 to 190 coordinates substrate; that stretch reads TH.

This sequence belongs to the aspartate/glutamate racemases family.

The enzyme catalyses L-glutamate = D-glutamate. Its pathway is cell wall biogenesis; peptidoglycan biosynthesis. Provides the (R)-glutamate required for cell wall biosynthesis. This Pasteurella multocida (strain Pm70) protein is Glutamate racemase.